Here is a 548-residue protein sequence, read N- to C-terminus: Acetylcholine receptor subunit alpha-type des-2 (548 aa).

Residues 1–19 (MLIIIQSLLLATTASLCIA) form the signal peptide. The Extracellular segment spans residues 21-239 (TPVPTQIRLV…LTLYLRRKPL (219 aa)). Residues Asn52, Asn96, and Asn224 are each glycosylated (N-linked (GlcNAc...) asparagine). 3 consecutive transmembrane segments (helical) span residues 240 to 260 (FYLVNLIIPTSIITLIAIVGF), 274 to 294 (VSLGITTLLSMSILMLMVSDQ), and 301 to 321 (FIPLIGWFILAMIIVISLGTV). Residues 422 to 460 (LIHLSPTAHQPDESISPSAPPVPSSSPLPPPLTPGPADD) are disordered. The span at 439 to 455 (SAPPVPSSSPLPPPLTP) shows a compositional bias: pro residues. The helical transmembrane segment at 517–537 (FVIFVVAFLIITFGINFIGFI) threads the bilayer. At 538-548 (HWHQAGVEYGG) the chain is on the cytoplasmic side.

It belongs to the ligand-gated ion channel (TC 1.A.9) family. Acetylcholine receptor (TC 1.A.9.1) subfamily. The functional receptor is a heteromer of deg-3 and des-2. Interacts with ric-3; which is required for proper receptor folding.

Its subcellular location is the cell membrane. Functionally, subunit of the non-synaptic neuronal acetylcholine receptor (AChR), which may play a role in chemotaxis towards choline. After binding choline or acetylcholine, the AChR responds by an extensive change in conformation that affects all subunits and leads to opening of an ion-conducting channel across the plasma membrane. This Caenorhabditis elegans protein is Acetylcholine receptor subunit alpha-type des-2 (des-2).